Reading from the N-terminus, the 105-residue chain is Large ribosomal subunit protein uL24 (105 aa).

It belongs to the universal ribosomal protein uL24 family. Part of the 50S ribosomal subunit.

In terms of biological role, one of two assembly initiator proteins, it binds directly to the 5'-end of the 23S rRNA, where it nucleates assembly of the 50S subunit. One of the proteins that surrounds the polypeptide exit tunnel on the outside of the subunit. The polypeptide is Large ribosomal subunit protein uL24 (Dictyoglomus thermophilum (strain ATCC 35947 / DSM 3960 / H-6-12)).